The following is a 640-amino-acid chain: Pleckstrin homology-like domain family B member 3 (640 aa).

Disordered stretches follow at residues 1–100 (MGTR…AARR), 162–189 (LEQQAASEQRGRQQREQEQRRLSQERDR), 241–262 (LERESRQEEEDRDSPGPQVPDP), 387–412 (GLQRTGSLPRKRGERGSQRGSPRPLS), and 476–504 (REGTRRGTEGSSGPAVPAITAPPTPPHPP). The span at 76–90 (PPIAMAATPPASTSS) shows a compositional bias: low complexity. A coiled-coil region spans residues 104–327 (QQLEALTRVA…ERSRLLELNC (224 aa)). The segment covering 170–189 (QRGRQQREQEQRRLSQERDR) has biased composition (basic and acidic residues). Residues 454–481 (DIAHMERLLQQAMAERERLLKAREGTRR) adopt a coiled-coil conformation. Pro residues predominate over residues 495 to 504 (TAPPTPPHPP). One can recognise a PH domain in the interval 532–635 (GCCCRGPLVK…WMDVIVTAAD (104 aa)).

The sequence is that of Pleckstrin homology-like domain family B member 3 (PHLDB3) from Homo sapiens (Human).